Consider the following 1043-residue polypeptide: Probable inorganic carbon transporter subunit DabA (1043 aa).

Zn(2+) contacts are provided by Cys460, Asp462, His719, and Cys734.

It belongs to the inorganic carbon transporter (TC 9.A.2) DabA family. As to quaternary structure, forms a complex with DabB. Zn(2+) is required as a cofactor.

The protein localises to the cell inner membrane. Part of an energy-coupled inorganic carbon pump. The chain is Probable inorganic carbon transporter subunit DabA from Thiobacillus denitrificans (strain ATCC 25259 / T1).